The following is a 37-amino-acid chain: Bacteriocin lactococcin MMFII (37 aa).

A disulfide bond links cysteine 9 and cysteine 14.

The protein resides in the secreted. Bacteriocin active against Listeria monocytogenes and Lactococcus cremoris. This Lactococcus lactis subsp. lactis (Streptococcus lactis) protein is Bacteriocin lactococcin MMFII.